We begin with the raw amino-acid sequence, 440 residues long: Nuclear hormone receptor family member nhr-130 (440 aa).

Residues 34 to 110 (LYTCQVCALP…VGMDPGRFQF (77 aa)) constitute a DNA-binding region (nuclear receptor). 2 NR C4-type zinc fingers span residues 37–57 (CQVC…CRAC) and 74–93 (CKKQ…CKKC). Residues 184–439 (EKPLIARNNL…FSHPEMFEDT (256 aa)) enclose the NR LBD domain.

The protein belongs to the nuclear hormone receptor family.

The protein resides in the nucleus. In terms of biological role, orphan nuclear receptor. This Caenorhabditis elegans protein is Nuclear hormone receptor family member nhr-130 (nhr-130).